Reading from the N-terminus, the 485-residue chain is Auxin transporter protein 1 (485 aa).

Residues 1–59 (MSEGVEAIVANDNGTDQVNGNRTGKDNEEHDGSTGSNLSNFLWHGGSVWDAWFSCASNQ) lie on the Cytoplasmic side of the membrane. Over residues 12-22 (DNGTDQVNGNR) the composition is skewed to polar residues. The segment at 12–33 (DNGTDQVNGNRTGKDNEEHDGS) is disordered. Over residues 23 to 32 (TGKDNEEHDG) the composition is skewed to basic and acidic residues. Residues 60 to 77 (VAQVLLTLPYSFSQLGML) form a helical membrane-spanning segment. The Extracellular portion of the chain corresponds to 78-79 (SG). A helical transmembrane segment spans residues 80–100 (IVLQIFYGLLGSWTAYLISVL). The Cytoplasmic segment spans residues 101–135 (YVEYRARKEKEGKSFKNHVIQWFEVLDGLLGSYWK). A helical transmembrane segment spans residues 136 to 156 (ALGLAFNCTFLLFGSVIQLIA). At 157–172 (CASNIYYINDHLDKRT) the chain is on the extracellular side. The chain crosses the membrane as a helical span at residues 173–193 (WTYIFGACCATTVFIPSFHNY). Residues 194–196 (RIW) lie on the Cytoplasmic side of the membrane. The helical transmembrane segment at 197–217 (SFLGLGMTTYTAWYLAIASII) threads the bilayer. Residues 218-232 (HGQAEGVKHSGPTKL) lie on the Extracellular side of the membrane. The chain crosses the membrane as a helical span at residues 233–253 (VLYFTGATNILYTFGGHAVTV). The Cytoplasmic segment spans residues 254–266 (EIMHAMWKPQKFK). A helical membrane pass occupies residues 267-287 (YIYLMATLYVFTLTIPSAAAV). Over 288–314 (YWAFGDALLDHSNAFSLMPKNAWRDAA) the chain is Extracellular. The chain crosses the membrane as a helical span at residues 315 to 335 (VILMLIHQFITFGFACTPLYF). Topologically, residues 336-356 (VWEKVIGMHDTKSICLRALAR) are cytoplasmic. Residues 357-377 (LPVVIPIWFLAIIFPFFGPIN) traverse the membrane as a helical segment. Position 378 (Ser-378) is a topological domain, extracellular. The chain crosses the membrane as a helical span at residues 379 to 399 (AVGALLVSFTVYIIPSLAHML). Over 400–425 (TYRSASARQNAAEKPPFFMPSWTAMY) the chain is Cytoplasmic. The helical transmembrane segment at 426-446 (VLNAFVVVWVLIVGFGFGGWA) threads the bilayer. The Extracellular portion of the chain corresponds to 447–485 (SVTNFVRQVDTFGLFAKCYQCKPAAAAAHAPVSALHHRL).

The protein belongs to the amino acid/polyamine transporter 2 family. Amino acid/auxin permease (AAAP) (TC 2.A.18.1) subfamily. As to expression, expressed in root and shoot apical tissues. In root apex, confined to stele initials, protophloem poles, statolith-containing S2 columella cells, lateral root cap cells (LRC), and in epidermal cells from the distal elongation zone (DEZ) up to central elongation zone (CEZ).

It localises to the cell membrane. Auxin uptake mediated by AUX1 is inhibited by chromosaponin-1 (CSI), 1-naphthoxyacetic acid (1-NOA) and 3-chloro-4-hydroxyphenylacetic acid (CHPAA). Its function is as follows. Carrier protein involved in proton-driven auxin influx. Mediates the formation of auxin gradient from developing leaves (site of auxin biosynthesis) to tips by contributing to the loading of auxin in vascular tissues and facilitating acropetal (base to tip) auxin transport within inner tissues of the root apex, and basipetal (tip to base) auxin transport within outer tissues of the root apex. Unloads auxin from the mature phloem to deliver the hormone to the root meristem via the protophloem cell files. Coordinated subcellular localization of AUX1 is regulated by a brefeldin A-sensitive (BFA) vesicle trafficking process. Involved in lateral root formation, trichoblast polarization and root hair elongation. Required for gravitropism and thigmotropism, especially in roots, by modulating responses to auxin, ethylene and cytokinins such as benzyladenine (BA). Needed for ammonium-mediated root-growth inhibition. Confers sensitivity to the herbicide 2,4-dichlorophenoxyacetic acid (2,4-D, auxin analog), and to polar auxin transport inhibitors such as N-1-naphthylphthalamic acid (NPA) and 2,3,5-triiodobenzoic acid (TIBA). In Arabidopsis thaliana (Mouse-ear cress), this protein is Auxin transporter protein 1 (AUX1).